The sequence spans 361 residues: DNA replication and repair protein RecF (361 aa).

30-37 (GANGSGKT) lines the ATP pocket.

This sequence belongs to the RecF family.

Its subcellular location is the cytoplasm. The RecF protein is involved in DNA metabolism; it is required for DNA replication and normal SOS inducibility. RecF binds preferentially to single-stranded, linear DNA. It also seems to bind ATP. This is DNA replication and repair protein RecF from Pectobacterium atrosepticum (strain SCRI 1043 / ATCC BAA-672) (Erwinia carotovora subsp. atroseptica).